The chain runs to 2919 residues: MRSRAASAPLPTPLLPLLLLLLLLPPSPLLGDQVGPCRSLGSGGRSSSGACAPVGWLCPASASNLWLYTSRCRESGIELTGHLVPHHDGLRVWCPESGAHIPLPPSSEGCPWSCRLLGIGGHLSPQGTLTLPEEHPCLKAPRLRCQSCKLAQAPGLRAGEGSPEESLGGRRKRNVNTAPQFQPPSYQATVPENQPAGTSVASLRAIDPDEGEAGRLEYTMDALFDSRSNHFFSLDPITGVVTTAEELDRETKSTHVFRVTAQDHGMPRRSALATLTILVTDTNDHDPVFEQQEYKESLRENLEVGYEVLTVRATDGDAPPNANILYRLLEGAGGSPSDAFEIDPRSGVIRTRGPVDREEVESYKLTVEASDQGRDPGPRSSTAIVFLSVEDDNDNAPQFSEKRYVVQVREDVTPGAPVLRVTASDRDKGSNALVHYSIMSGNARGQFYLDAQTGALDVVSPLDYETTKEYTLRIRAQDGGRPPLSNVSGLVTVQVLDINDNAPIFVSTPFQATVLESVPLGYLVLHVQAIDADAGDNARLEYSLAGVGHDFPFTINNGTGWISVAAELDREEVDFYSFGVEARDHGTPALTASASVSVTILDVNDNNPTFTQPEYTVRLNEDAAVGTSVVTVSAVDRDAHSVITYQITSGNTRNRFSITSQSGGGLVSLALPLDYKLERQYVLAVTASDGTRQDTAQIVVNVTDANTHRPVFQSSHYTVNVNEDRPAGTTVVLISATDEDTGENARITYFMEDSIPQFRIDADTGAVTTQAELDYEDQVSYTLAITARDNGIPQKSDTTYLEILVNDVNDNAPQFLRDSYQGSVYEDVPPFTSVLQISATDRDSGLNGRVFYTFQGGDDGDGDFIVESTSGIVRTLRRLDRENVAQYVLRAYAVDKGMPPARTPMEVTVTVLDVNDNPPVFEQDEFDVFVEENSPIGLAVARVTATDPDEGTNAQIMYQIVEGNIPEVFQLDIFSGELTALVDLDYEDRPEYVLVIQATSAPLVSRATVHVRLLDRNDNPPVLGNFEILFNNYVTNRSSSFPGGAIGRVPAHDPDISDSLTYSFERGNELSLVLLNASTGELRLSRALDNNRPLEAIMSVLVSDGVHSVTAQCSLRVTIITDEMLTHSITLRLEDMSPERFLSPLLGLFIQAVAATLATPPDHVVVFNVQRDTDAPGGHILNVSLSVGQPPGPGGGPPFLPSEDLQERLYLNRSLLTAISAQRVLPFDDNICLREPCENYMRCVSVLRFDSSAPFIASSSVLFRPIHPVGGLRCRCPPGFTGDYCETEVDLCYSRPCGPHGRCRSREGGYTCLCLDGYTGEHCEASTHSGRCTPGVCKNGGTCVNLLVGGFKCDCPSGDFEKPFCQVTTRSFPARSFITFRGLRQRFHFTLALSFATKERNGLLLYNGRFNEKHDFVALEVIQEQVQLTFSAGESTTTVSPFVPGGVSDGQWHTVQLKYYNKPLLGQTGLPQGPSEQKVAVVSVDGCDTGVALRFGAMLGNYSCAAQGTQGGSKKSLDLTGPLLLGGVPDLPESFPVRMRHFVGCMKDLQVDSRHIDMADFIANNGTVPGCPTKKIVCDSSICHNGGTCVNQWNAFSCECPLGFGGKSCAQEMANPQRFLGSSLVAWHGLSLPISQPWHLSLMFRTRQADGVLLQAVTRGRSTITLQLRAGHVVLSVEGTGLQASSLRLEPGRANDGDWHHAQLALGASGGPGHAILSFDYGQQKAEGNLGPRLHGLHLSNITVGGVPGPASGVARGFRGCLQGVRVSETPEGISSLDPSRGESINVEPGCSWPDPCDSNPCPTNSYCSNDWDSYSCSCVLGYYGDNCTNVCDLNPCEHQSVCTRKPNTPHGYICECLPNYLGPYCETRIDQPCPRGWWGHPTCGPCNCDVSKGFDPDCNKTSGECHCKENHYRPPGSPTCLLCDCYPTGSLSRVCDPEDGQCPCKPGVIGRQCDRCDNPFAEVTTNGCEVNYDSCPRAIEAGIWWPRTRFGLPAAAPCPKGSFGTAVRHCDEHRGWLPPNLFNCTSVTFSELKGFAERLQRNESGLDSGRSQRLALLLRNATQHTSGYFGSDVKVAYQLATRLLAHESAQRGFGLSATQDVHFTENLLRVGSALLDAANKRHWELIQQTEGGTAWLLQHYEAYASALAQNMRHTYLSPFTIVTPNIVISVVRLDKGNFAGTKLPRYEALRGERPPDLETTVILPESVFREMPSMVRSAGPGEAQETEELARRQRRHPELSQGEAVASVIIYHTLAGLLPHNYDPDKRSLRVPKRPVINTPVVSISVHDDEELLPRALDKPVTVQFRLLETEERTKPICVFWNHSILVSGTGGWSARGCEVVFRNESHVSCQCNHMTSFAVLMDMSRRENGEILPLKTLTYVALGVTLAALMLTFLFLTLLRALRSNQHGIRRNLTAALGLAQLVFLLGINQADLPFACTVIAILLHFLYLCTFSWALLEALHLYRALTEVRDVNASPMRFYYMLGWGVPAFITGLAVGLDPEGYGNPDFCWLSVYDTLIWSFAGPVAFAVSMSVFLYILSARASCAAQRQGFEKKGPVSGLRSSFTVLLLLSATWLLALLSVNSDTLLFHYLFAACNCVQGPFIFLSYVVLSKEVRKALKFACSRKPSPDPALTTKSTLTSSYNCPSPYADGRLYQPYGDSAGSLHSASRSGKSQPSYIPFLLREESTLNPGQVPPGLGDPSGLFLEGQAQQHDPDTDSDSDLSLEDDQSGSYASTHSSDSEEEEEEAAFPGEQGWDSLLGPGAERLPLHSTPKDGGPGSGKVPWLGDFGTTTKENSGSGPLEERPRENGDALTREGSLGPLPGPSTQPHKGILKKKCLPTISEKSSLLRLPLEQGTGSSRGSSISEGSRHGPPPRPPPRQSLQEQLNGVMPVAMSIKAGTVDEDSSGSEFLFFNFLH.

The N-terminal stretch at 1–31 is a signal peptide; it reads MRSRAASAPLPTPLLPLLLLLLLLPPSPLLG. Topologically, residues 32-2380 are extracellular; it reads DQVGPCRSLG…GEILPLKTLT (2349 aa). A disordered region spans residues 156-194; it reads LRAGEGSPEESLGGRRKRNVNTAPQFQPPSYQATVPENQ. The span at 175 to 194 shows a compositional bias: polar residues; that stretch reads VNTAPQFQPPSYQATVPENQ. 9 Cadherin domains span residues 182–289, 290–399, 400–505, 506–610, 611–712, 713–815, 816–921, 922–1023, and 1028–1146; these read QPPS…DPVF, EQQE…APQF, SEKR…APIF, VSTP…NPTF, TQPE…RPVF, QSSH…APQF, LRDS…PPVF, EQDE…PPVL, and ILFN…SPLL. Residues N486, N557, and N701 are each glycosylated (N-linked (GlcNAc...) asparagine). Residues N1036, N1076, N1182, and N1212 are each glycosylated (N-linked (GlcNAc...) asparagine). The EGF-like 1; atypical domain occupies 1228-1286; it reads DDNICLREPCENYMRCVSVLRFDSSAPFIASSSVLFRPIHPVGGLRCRCPPGFTGDYCE. The 31-residue stretch at 1288-1318 folds into the EGF-like 2; calcium-binding domain; the sequence is EVDLCYSRPCGPHGRCRSREGGYTCLCLDGY. Intrachain disulfides connect C1292–C1303, C1297–C1312, C1314–C1323, C1332–C1343, C1337–C1353, and C1355–C1365. The EGF-like 3; calcium-binding domain occupies 1328–1366; that stretch reads HSGRCTPGVCKNGGTCVNLLVGGFKCDCPSGDFEKPFCQ. Residues 1367 to 1571 enclose the Laminin G-like 1 domain; sequence VTTRSFPARS…IANNGTVPGC (205 aa). N-linked (GlcNAc...) asparagine glycans are attached at residues N1501 and N1565. Cystine bridges form between C1545-C1571, C1578-C1589, C1583-C1598, and C1600-C1609. Residues 1574–1610 enclose the EGF-like 4; calcium-binding domain; that stretch reads KKIVCDSSICHNGGTCVNQWNAFSCECPLGFGGKSCA. At N1591 the chain carries (3R)-3-hydroxyasparagine. A Laminin G-like 2 domain is found at 1614–1791; the sequence is ANPQRFLGSS…GESINVEPGC (178 aa). N1741 carries N-linked (GlcNAc...) asparagine glycosylation. The EGF-like 5; calcium-binding domain maps to 1787–1829; it reads VEPGCSWPDPCDSNPCPTNSYCSNDWDSYSCSCVLGYYGDNCT. Disulfide bonds link C1791-C1802, C1797-C1817, C1819-C1828, C1832-C1843, C1837-C1855, C1857-C1866, C1887-C1899, C1889-C1906, C1908-C1921, C1924-C1936, C1926-C1943, C1945-C1954, and C1957-C1969. A glycan (N-linked (GlcNAc...) asparagine) is linked at N1827. An EGF-like 6; calcium-binding domain is found at 1830-1867; the sequence is NVCDLNPCEHQSVCTRKPNTPHGYICECLPNYLGPYCE. The region spanning 1883–1922 is the EGF-like 7; calcium-binding domain; it reads TCGPCNCDVSKGFDPDCNKTSGECHCKENHYRPPGSPTCL. Residue N1900 is glycosylated (N-linked (GlcNAc...) asparagine). Residues 1924–1971 form the Laminin EGF-like domain; the sequence is CDCYPTGSLSRVCDPEDGQCPCKPGVIGRQCDRCDNPFAEVTTNGCEV. 3 N-linked (GlcNAc...) asparagine glycosylation sites follow: N2024, N2043, and N2061. A GAIN-B domain is found at 2199–2369; it reads ETTVILPESV…AVLMDMSRRE (171 aa). The tract at residues 2216–2241 is disordered; the sequence is VRSAGPGEAQETEELARRQRRHPELS. Disulfide bonds link C2319–C2351 and C2339–C2353. Residues 2319 to 2369 form a GPS region; that stretch reads CVFWNHSILVSGTGGWSARGCEVVFRNESHVSCQCNHMTSFAVLMDMSRRE. Residues N2323 and N2345 are each glycosylated (N-linked (GlcNAc...) asparagine). A helical membrane pass occupies residues 2381 to 2401; that stretch reads YVALGVTLAALMLTFLFLTLL. The Cytoplasmic portion of the chain corresponds to 2402-2413; the sequence is RALRSNQHGIRR. Residues 2414 to 2433 traverse the membrane as a helical segment; that stretch reads NLTAALGLAQLVFLLGINQA. Topologically, residues 2434-2438 are extracellular; that stretch reads DLPFA. Residues 2439–2459 traverse the membrane as a helical segment; the sequence is CTVIAILLHFLYLCTFSWALL. Residues 2460–2480 are Cytoplasmic-facing; the sequence is EALHLYRALTEVRDVNASPMR. A helical transmembrane segment spans residues 2481–2501; sequence FYYMLGWGVPAFITGLAVGLD. At 2502-2518 the chain is on the extracellular side; sequence PEGYGNPDFCWLSVYDT. Residues 2519–2539 traverse the membrane as a helical segment; that stretch reads LIWSFAGPVAFAVSMSVFLYI. Residues 2540–2563 lie on the Cytoplasmic side of the membrane; that stretch reads LSARASCAAQRQGFEKKGPVSGLR. A helical membrane pass occupies residues 2564–2584; that stretch reads SSFTVLLLLSATWLLALLSVN. The Extracellular segment spans residues 2585–2591; the sequence is SDTLLFH. Residues 2592–2612 traverse the membrane as a helical segment; that stretch reads YLFAACNCVQGPFIFLSYVVL. The Cytoplasmic segment spans residues 2613-2919; it reads SKEVRKALKF…SEFLFFNFLH (307 aa). The segment at 2690–2884 is disordered; sequence LNPGQVPPGL…PPRPPPRQSL (195 aa). Acidic residues predominate over residues 2718 to 2730; sequence TDSDSDLSLEDDQ. Over residues 2791 to 2800 the composition is skewed to polar residues; the sequence is GTTTKENSGS. The span at 2803 to 2815 shows a compositional bias: basic and acidic residues; that stretch reads LEERPRENGDALT. A compositionally biased stretch (low complexity) spans 2857–2868; that stretch reads GTGSSRGSSISE.

It belongs to the G-protein coupled receptor 2 family. LN-TM7 subfamily. In terms of assembly, heterodimer of 2 chains generated by proteolytic processing; the large extracellular N-terminal fragment and the membrane-bound C-terminal fragment predominantly remain associated and non-covalently linked. The iron and 2-oxoglutarate dependent 3-hydroxylation of aspartate and asparagine is (R) stereospecific within EGF domains. Post-translationally, autoproteolytically processed at the GPS region of the GAIN-B domain; this cleavage modulates receptor activity. In terms of tissue distribution, expressed in the CNS and in the eye.

The protein localises to the cell membrane. Receptor that may have an important role in cell/cell signaling during nervous system formation. This is Cadherin EGF LAG seven-pass G-type receptor 2 from Mus musculus (Mouse).